The sequence spans 120 residues: uncharacterized protein (120 aa).

Transmembrane regions (helical) follow at residues 8-28 (PFVTGVLLPSAVFSFLFCTLV) and 55-75 (FLENTLIFLGSGNLTAHIGIL).

The protein resides in the membrane. This is an uncharacterized protein from Saccharomyces cerevisiae (strain ATCC 204508 / S288c) (Baker's yeast).